Reading from the N-terminus, the 486-residue chain is F420-non-reducing hydrogenase iron-sulfur subunit A (486 aa).

Residues Cys61 and Cys64 each contribute to the Ni(2+) site.

This sequence belongs to the [NiFe]/[NiFeSe] hydrogenase large subunit family. The F420-non-reducing hydrogenase is composed of three subunits; MvhA, MvhD and MvhG. It forms a complex with the heterodisulfide reductase (Hdr). Ni(2+) serves as cofactor.

The protein resides in the cytoplasm. In terms of biological role, part of a complex that provides reducing equivalents for heterodisulfide reductase. This chain is F420-non-reducing hydrogenase iron-sulfur subunit A (mvhA), found in Archaeoglobus profundus (strain DSM 5631 / JCM 9629 / NBRC 100127 / Av18).